The sequence spans 230 residues: Large ribosomal subunit protein uL1 (230 aa).

Belongs to the universal ribosomal protein uL1 family. As to quaternary structure, part of the 50S ribosomal subunit.

Functionally, binds directly to 23S rRNA. The L1 stalk is quite mobile in the ribosome, and is involved in E site tRNA release. In terms of biological role, protein L1 is also a translational repressor protein, it controls the translation of the L11 operon by binding to its mRNA. This Aster yellows witches'-broom phytoplasma (strain AYWB) protein is Large ribosomal subunit protein uL1.